We begin with the raw amino-acid sequence, 65 residues long: DNA gyrase inhibitor YacG (65 aa).

Residues Cys-10, Cys-13, Cys-29, and Cys-33 each contribute to the Zn(2+) site. A disordered region spans residues Glu-45–Tyr-65. A compositionally biased stretch (acidic residues) spans Ser-55–Tyr-65.

Belongs to the DNA gyrase inhibitor YacG family. In terms of assembly, interacts with GyrB. Zn(2+) is required as a cofactor.

Inhibits all the catalytic activities of DNA gyrase by preventing its interaction with DNA. Acts by binding directly to the C-terminal domain of GyrB, which probably disrupts DNA binding by the gyrase. The sequence is that of DNA gyrase inhibitor YacG from Vibrio cholerae serotype O1 (strain ATCC 39315 / El Tor Inaba N16961).